Reading from the N-terminus, the 197-residue chain is Inner membrane-spanning protein YciB (197 aa).

A run of 5 helical transmembrane segments spans residues Ile36–Leu56, Gly64–Ser84, Trp90–Gly110, Leu135–Phe155, and Phe162–Leu182.

This sequence belongs to the YciB family.

It localises to the cell inner membrane. Functionally, plays a role in cell envelope biogenesis, maintenance of cell envelope integrity and membrane homeostasis. This Pseudomonas putida (strain GB-1) protein is Inner membrane-spanning protein YciB.